Consider the following 504-residue polypeptide: Lysine--tRNA ligase (504 aa).

Positions 404 and 411 each coordinate Mg(2+).

Belongs to the class-II aminoacyl-tRNA synthetase family. Homodimer. Requires Mg(2+) as cofactor.

Its subcellular location is the cytoplasm. It carries out the reaction tRNA(Lys) + L-lysine + ATP = L-lysyl-tRNA(Lys) + AMP + diphosphate. The sequence is that of Lysine--tRNA ligase from Aliarcobacter butzleri (strain RM4018) (Arcobacter butzleri).